A 78-amino-acid chain; its full sequence is UPF0270 protein PC1_3850 (78 aa).

The protein belongs to the UPF0270 family.

The protein is UPF0270 protein PC1_3850 of Pectobacterium carotovorum subsp. carotovorum (strain PC1).